The sequence spans 261 residues: Succinate dehydrogenase iron-sulfur subunit (261 aa).

The 2Fe-2S ferredoxin-type domain maps to 28 to 119 (RKVKVYRYDP…DIKIYPLPHM (92 aa)). Cys80, Cys85, and Cys100 together coordinate [2Fe-2S] cluster. Positions 161–191 (DREKLDGLYECILCACCSTSCPSYWWNGDKY) constitute a 4Fe-4S ferredoxin-type domain. Residues Cys171, Cys174, and Cys177 each contribute to the [4Fe-4S] cluster site. Residue Cys181 coordinates [3Fe-4S] cluster. Trp186 provides a ligand contact to a ubiquinone. 2 residues coordinate [3Fe-4S] cluster: Cys228 and Cys234. Cys238 is a binding site for [4Fe-4S] cluster.

This sequence belongs to the succinate dehydrogenase/fumarate reductase iron-sulfur protein family. In terms of assembly, part of an enzyme complex containing four subunits: a flavoprotein, an iron-sulfur, cytochrome b-556, and a hydrophobic anchor protein. The cofactor is [2Fe-2S] cluster. It depends on [3Fe-4S] cluster as a cofactor. [4Fe-4S] cluster serves as cofactor.

The catalysed reaction is a quinone + succinate = fumarate + a quinol. It functions in the pathway carbohydrate metabolism; tricarboxylic acid cycle; fumarate from succinate (bacterial route): step 1/1. The protein is Succinate dehydrogenase iron-sulfur subunit (sdhB) of Rickettsia prowazekii (strain Madrid E).